The chain runs to 274 residues: Large ribosomal subunit protein uL2 (274 aa).

Disordered regions lie at residues 37-60 (QHQK…GHKH) and 224-252 (AMNP…WGNL). Over residues 50–60 (TTRHKGGGHKH) the composition is skewed to basic residues. Residues 229 to 246 (DHPHGGGEGRTGEGRHAV) are compositionally biased toward basic and acidic residues.

The protein belongs to the universal ribosomal protein uL2 family. Part of the 50S ribosomal subunit. Forms a bridge to the 30S subunit in the 70S ribosome.

Its function is as follows. One of the primary rRNA binding proteins. Required for association of the 30S and 50S subunits to form the 70S ribosome, for tRNA binding and peptide bond formation. It has been suggested to have peptidyltransferase activity; this is somewhat controversial. Makes several contacts with the 16S rRNA in the 70S ribosome. The protein is Large ribosomal subunit protein uL2 of Paracidovorax citrulli (strain AAC00-1) (Acidovorax citrulli).